A 694-amino-acid polypeptide reads, in one-letter code: Cyclic nucleotide-gated channel beta-3 (694 aa).

Residues 1–210 are Cytoplasmic-facing; that stretch reads MLKSLTVKFN…SIDSYTDRVY (210 aa). 2 disordered regions span residues 24–82 and 146–177; these read CPNL…DPEC and ENFP…KEHQ. Polar residues-rich tracts occupy residues 26–40 and 153–168; these read NLSS…QGDN and ASSQ…PKQE. Residues 211 to 234 form a helical membrane-spanning segment; that stretch reads LLWLLLVTIAYNWNCWLLPVRLVF. At 235-241 the chain is on the extracellular side; sequence PCQTPDN. The chain crosses the membrane as a helical span at residues 242-262; that stretch reads KNYWIITDIVCDIIYLCDILL. Residues 263 to 291 lie on the Cytoplasmic side of the membrane; it reads IQPRLQFVRGGEIIVDSNELKRNYRSSTK. The chain crosses the membrane as a helical span at residues 292-309; it reads FRMDVASLLPFEVLYIFF. The Extracellular segment spans residues 310 to 312; it reads GVN. The chain crosses the membrane as a helical span at residues 313–327; that stretch reads PIFRANRILKYTSFF. Topologically, residues 328–340 are cytoplasmic; it reads EFNHHLESIMDKA. The segment at 340–439 is ion conduction pathway; the sequence is AYVYRVIRTT…IGQMRDVIGA (100 aa). A helical transmembrane segment spans residues 341–363; that stretch reads YVYRVIRTTGYLLFLLHINACVY. Residues 364 to 385 are Extracellular-facing; sequence YWASDYEGIGSTKWVYNGEGNK. 2 helical membrane passes run 386 to 412 and 413 to 437; these read YLRC…SFEI and VFQF…RDVI. The segment at 399 to 402 is selectivity filter; sequence TIGG. Residues 438–694 lie on the Cytoplasmic side of the membrane; it reads GAATANQNYF…KGKRKTTTQK (257 aa). Residues 442–518 form a C-linker region; sequence ANQNYFQACM…SIIDKVELFK (77 aa). The segment at 522 to 638 is cyclic nucleotide-binding domain; it reads TQMIYDLLLR…LLMKKAKILL (117 aa). 4 residues coordinate 3',5'-cyclic GMP: Gly583, Glu584, Arg596, and Thr597.

This sequence belongs to the cyclic nucleotide-gated cation channel (TC 1.A.1.5) family. CNGB3 subfamily. Forms heterotetrameric channels composed of CNGA3 and CNGB3 subunits with 3:1 stoichiometry. As to expression, small subset of retinal photoreceptor cells and testis.

It is found in the cell membrane. The catalysed reaction is Ca(2+)(in) = Ca(2+)(out). It carries out the reaction Na(+)(in) = Na(+)(out). It catalyses the reaction K(+)(in) = K(+)(out). The enzyme catalyses NH4(+)(in) = NH4(+)(out). The catalysed reaction is Rb(+)(in) = Rb(+)(out). It carries out the reaction Li(+)(in) = Li(+)(out). It catalyses the reaction Cs(+)(in) = Cs(+)(out). In terms of biological role, pore-forming subunit of the cone cyclic nucleotide-gated channel. Mediates cone photoresponses at bright light converting transient changes in intracellular cGMP levels into electrical signals. In the dark, cGMP levels are high and keep the channel open enabling a steady inward current carried by Na(+) and Ca(2+) ions that leads to membrane depolarization and neurotransmitter release from synaptic terminals. Upon photon absorption cGMP levels decline leading to channel closure and membrane hyperpolarization that ultimately slows neurotransmitter release and signals the presence of light, the end point of the phototransduction cascade. Conducts cGMP- and cAMP-gated ion currents, with permeability for monovalent and divalent cations. The sequence is that of Cyclic nucleotide-gated channel beta-3 from Mus musculus (Mouse).